The following is a 63-amino-acid chain: Large ribosomal subunit protein uL30 (63 aa).

Belongs to the universal ribosomal protein uL30 family. As to quaternary structure, part of the 50S ribosomal subunit.

The protein is Large ribosomal subunit protein uL30 of Rickettsia canadensis (strain McKiel).